The primary structure comprises 275 residues: Autophagy-related protein 5 (275 aa).

Residue Lys-129 forms a Glycyl lysine isopeptide (Lys-Gly) (interchain with G-Cter in lgg-3/ATG12) linkage. Low complexity predominate over residues 221-231 (LSSSSSSSTDS). The segment at 221 to 241 (LSSSSSSSTDSQSEHPPRLIS) is disordered.

This sequence belongs to the ATG5 family. As to quaternary structure, most likely a component of a complex at least containing atg-5, lgg-3/ATG12, atg-16.1 and/or atg-16.2. Interacts with lgg-3/ATG12. Interacts with atg-16.1 (via N-terminus) and atg-16.2 (via N-terminus). Conjugated to lgg-3/ATG12; which is essential for autophagy.

The protein localises to the preautophagosomal structure membrane. Involved in autophagic vesicle formation. Conjugation with lgg-3/ATG12, through a ubiquitin-like conjugating system involving atg-7 as an E1-like activating enzyme and atg-10 as an E2-like conjugating enzyme, is essential for its function. Most likely a component of an atg-5-lgg-3-atg-16 complex that promotes autophagosome formation by associating with lgg-2, but not lgg-1, at the preautophagosomal membrane. Probably, as part of an atg-5-lgg-3-atg-16 complex, required for lgg-1 lipidation; the complex acts as an E3-like enzyme promoting atg-3-mediated lgg-1 lipidation. Furthermore, association with atg-16.2 is required for the nucleation of lgg-1 positive autophagic vesicles. This Caenorhabditis elegans protein is Autophagy-related protein 5.